Reading from the N-terminus, the 202-residue chain is Oxopyrrolidines biosynthesis cluster protein O (202 aa).

In terms of biological role, part of the gene cluster that mediates the biosynthesis of oxopyrrolidines, polyketide-amino acid hybrid compounds with feature structures of tetramic acid. Does not seem to play a role in oxopyrrolidines A and B biosynthesis. The sequence is that of Oxopyrrolidines biosynthesis cluster protein O from Penicillium oxalicum (strain 114-2 / CGMCC 5302) (Penicillium decumbens).